A 325-amino-acid polypeptide reads, in one-letter code: Probable siderophore-binding lipoprotein YfiY (325 aa).

An N-terminal signal peptide occupies residues methionine 1–alanine 20. A lipid anchor (N-palmitoyl cysteine) is attached at cysteine 21. A lipid anchor (S-diacylglycerol cysteine) is attached at cysteine 21. The region spanning arginine 56–lysine 325 is the Fe/B12 periplasmic-binding domain. Serine 290 bears the Phosphoserine mark. The residue at position 302 (threonine 302) is a Phosphothreonine.

This sequence belongs to the bacterial solute-binding protein 8 family. In terms of assembly, the complex is composed of one ATP-binding protein (YusV), two transmembrane proteins (YfiZ and YfhA) and a solute-binding protein (YfiY). Interacts with FloT.

The protein resides in the cell membrane. It is found in the cytoplasm. Its subcellular location is the membrane raft. In terms of biological role, part of the ABC transporter complex YfiYZ/YfhA/YusV involved in import of the iron-hydroxamate siderophores schizokinen, arthrobactin and corprogen. Binds the siderophores and delivers them to the surface of YfiZ/YfhA. In Bacillus subtilis (strain 168), this protein is Probable siderophore-binding lipoprotein YfiY (yfiY).